We begin with the raw amino-acid sequence, 559 residues long: Pentatricopeptide repeat-containing protein At4g38010 (559 aa).

12 PPR repeats span residues 70 to 104 (SSFS…GFSP), 105 to 139 (DMFT…GFYD), 140 to 170 (DIYV…MPVR), 171 to 201 (DVVS…MDVE), 203 to 233 (NLAT…ILKR), 238 to 268 (SLET…LEKK), 269 to 304 (DKVS…GIKP), 305 to 339 (DGHI…GIKW), 340 to 370 (DTHI…IRSK), 371 to 405 (NVFT…GFKP), 406 to 440 (NLVT…EYNL), and 443 to 473 (KLEH…MPVK). Residues 478–554 (ICGAILSACK…VPGSSYIEKF (77 aa)) are type E motif.

Belongs to the PPR family. PCMP-E subfamily.

The polypeptide is Pentatricopeptide repeat-containing protein At4g38010 (PCMP-E45) (Arabidopsis thaliana (Mouse-ear cress)).